A 164-amino-acid chain; its full sequence is Cilia- and flagella-associated protein 20 (164 aa).

Belongs to the CFAP20 family. In terms of assembly, microtubule inner protein component of sperm flagellar doublet microtubules.

Its subcellular location is the nucleus. The protein localises to the cytoplasm. It localises to the cytoskeleton. It is found in the microtubule organizing center. The protein resides in the centrosome. Its subcellular location is the centriole. The protein localises to the cilium basal body. It localises to the cilium axoneme. It is found in the flagellum axoneme. Its function is as follows. Cilium- and flagellum-specific protein that plays a role in axonemal structure organization and motility. Microtubule inner protein (MIP) part of the dynein-decorated doublet microtubules (DMTs) in cilia axoneme, which is required for motile cilia beating. Involved in the regulation of the size and morphology of cilia. Required for axonemal microtubules polyglutamylation. This is Cilia- and flagella-associated protein 20 (Cfap20) from Rattus norvegicus (Rat).